The primary structure comprises 251 residues: MAGHSKWANTKHRKAAQDAKRGKIFTKIIRELVTAARLGGGDPATNPRLRAAVDKALSNNMTRDTLNRAIARGAGNDENDNMETIIYEGYGPGGTAVMVECLSDNRNRTVSDVRHAFTKTGGNLGTDGSVSYLFTKKGVISYAPGVDEDAVMEAALEAGAEDVETYDDGAIDVYTTPEAFGEVKDAMDAAGFVAESAEVSMIPSTKAELDIDTAPKLMRLIDMLEDSDDVQEVYHNGDISDEVAKQLEDIL.

Belongs to the TACO1 family.

It is found in the cytoplasm. In Proteus mirabilis (strain HI4320), this protein is Probable transcriptional regulatory protein PMI1113.